The following is a 367-amino-acid chain: Spore wall protein 9 (367 aa).

Positions 1–29 (MSTQPTKTSSTKLRIFKWLFIISTLVAIA) are cleaved as a signal peptide.

As to quaternary structure, interacts with SWP7.

Its subcellular location is the cytoplasm. It localises to the spore wall. It is found in the spore polar tube. In terms of biological role, involved in adherence of spores to the host cell surface and in infection efficiency. This chain is Spore wall protein 9, found in Nosema bombycis (strain CQ1 / CVCC 102059) (Microsporidian parasite).